The sequence spans 288 residues: Putative branched-chain-amino-acid aminotransferase (288 aa).

The residue at position 146 (Lys-146) is an N6-(pyridoxal phosphate)lysine.

The protein belongs to the class-IV pyridoxal-phosphate-dependent aminotransferase family. It depends on pyridoxal 5'-phosphate as a cofactor.

The catalysed reaction is L-leucine + 2-oxoglutarate = 4-methyl-2-oxopentanoate + L-glutamate. The enzyme catalyses L-isoleucine + 2-oxoglutarate = (S)-3-methyl-2-oxopentanoate + L-glutamate. It carries out the reaction L-valine + 2-oxoglutarate = 3-methyl-2-oxobutanoate + L-glutamate. It functions in the pathway amino-acid biosynthesis; L-isoleucine biosynthesis; L-isoleucine from 2-oxobutanoate: step 4/4. The protein operates within amino-acid biosynthesis; L-leucine biosynthesis; L-leucine from 3-methyl-2-oxobutanoate: step 4/4. Its pathway is amino-acid biosynthesis; L-valine biosynthesis; L-valine from pyruvate: step 4/4. Acts on leucine, isoleucine and valine. The sequence is that of Putative branched-chain-amino-acid aminotransferase (ilvE) from Methanocaldococcus jannaschii (strain ATCC 43067 / DSM 2661 / JAL-1 / JCM 10045 / NBRC 100440) (Methanococcus jannaschii).